A 605-amino-acid chain; its full sequence is Ubiquitin carboxyl-terminal hydrolase 2 (605 aa).

The tract at residues 1–200 is necessary for interaction with MDM4; the sequence is MSQLSSTLKR…CPEYLVDYLE (200 aa). Disordered stretches follow at residues 71–107 and 237–264; these read LLDYDRGRPLLRPDITGGGKRAESQTRGTERPLGSGL and WETGKGQAPGPSRSSSPGRDGMNSKSAQ. Residues 90–100 are compositionally biased toward basic and acidic residues; sequence KRAESQTRGTE. The segment covering 245 to 255 has biased composition (low complexity); sequence PGPSRSSSPGR. The region spanning 267–599 is the USP domain; it reads AGLRNLGNTC…DAYLLFYELA (333 aa). The active-site Nucleophile is the Cys-276. The necessary for interaction with MDM4 stretch occupies residues 403-503; that stretch reads YLEREDSRIG…FPKILVLHLK (101 aa). Cys-425, Cys-428, Cys-476, and Cys-479 together coordinate Zn(2+). Residue His-557 is the Proton acceptor of the active site.

The protein belongs to the peptidase C19 family. USP2 subfamily. In terms of assembly, homooligomer. Found in trimeric complex with MDM2 and MDM4 and USP2. Interacts with CCND1; the interaction is direct and promotes its stabilization by antagonizing ubiquitin-dependent degradation. Interacts (via N-terminus and C-terminus) with MDM2. Interacts with MDM4. Interacts with PER1. Interacts with KCNQ1; counteracts the NEDD4L-specific down-regulation of I(Ks) and restore plasma membrane localization of KCNQ1. Isoform 4: Interacts with NHERF4 and CLTC. As to expression, expressed in mesangial cells of the kidney and in different types of glomerulonephritides (at protein level).

The protein localises to the cytoplasm. The protein resides in the perinuclear region. It localises to the nucleus. Its subcellular location is the membrane. The catalysed reaction is Thiol-dependent hydrolysis of ester, thioester, amide, peptide and isopeptide bonds formed by the C-terminal Gly of ubiquitin (a 76-residue protein attached to proteins as an intracellular targeting signal).. With respect to regulation, cleavage is inhibited by ubiquitin in a dosage-dependent manner. Cleavage is blocked by ubiquitin aldehyde. Functionally, hydrolase that deubiquitinates polyubiquitinated target proteins such as MDM2, MDM4 and CCND1. Isoform 1 and isoform 4 possess both ubiquitin-specific peptidase and isopeptidase activities. Deubiquitinates MDM2 without reversing MDM2-mediated p53/TP53 ubiquitination and thus indirectly promotes p53/TP53 degradation and limits p53 activity. Has no deubiquitinase activity against p53/TP53. Prevents MDM2-mediated degradation of MDM4. Plays a role in the G1/S cell-cycle progression in normal and cancer cells. Regulates the circadian clock by modulating its intrinsic circadian rhythm and its capacity to respond to external cues. Associates with clock proteins and deubiquitinates core clock component PER1 but does not affect its overall stability. Regulates the nucleocytoplasmic shuttling and nuclear retention of PER1 and its repressive role on the clock transcription factors CLOCK and BMAL1. Plays a role in the regulation of myogenic differentiation of embryonic muscle cells. In terms of biological role, circadian clock output effector that regulates Ca(2+) absorption in the small intestine. Probably functions by regulating protein levels of the membrane scaffold protein NHERF4 in a rhythmic manner, and is therefore likely to control Ca(2+) membrane permeability mediated by the Ca(2+) channel TRPV6 in the intestine. In Homo sapiens (Human), this protein is Ubiquitin carboxyl-terminal hydrolase 2 (USP2).